A 469-amino-acid chain; its full sequence is tRNA (cytosine(72)-C(5))-methyltransferase NSUN6 (469 aa).

Residues 111–203 (QCEAIVGAQC…MGIRMTEPVY (93 aa)) form the PUA domain. S-adenosyl-L-methionine-binding positions include 242-248 (CAAPGGK), Asp-266, Asp-293, and Asp-323. Residue Cys-373 is the Nucleophile of the active site. Residue Lys-419 is modified to N6-acetyllysine.

The protein belongs to the class I-like SAM-binding methyltransferase superfamily. RsmB/NOP family.

The protein resides in the cytoplasm. It catalyses the reaction cytidine(72) in tRNA(Thr) + S-adenosyl-L-methionine = 5-methylcytidine(72) in tRNA(Thr) + S-adenosyl-L-homocysteine + H(+). The enzyme catalyses cytidine(72) in tRNA(Cys) + S-adenosyl-L-methionine = 5-methylcytidine(72) in tRNA(Cys) + S-adenosyl-L-homocysteine + H(+). S-adenosyl-L-methionine-dependent methyltransferase that specifically methylates the C5 position of cytosine 72 in tRNA(Thr)(TGT) and tRNA(Cys)(GCA). In vitro also methylates tRNA(Thr)(AGT). Methylation requires, in the acceptor stem region, the presence of the 3'-CCA terminus, the target site C72, the discriminator base U73, and the second and third base pairs (2:71 and 3:70) in the tRNA substrates. The sequence is that of tRNA (cytosine(72)-C(5))-methyltransferase NSUN6 from Homo sapiens (Human).